We begin with the raw amino-acid sequence, 318 residues long: tRNA-cytidine(32) 2-sulfurtransferase (318 aa).

The tract at residues 1–29 is disordered; it reads MNHVSSTKPDTAPSKHLTSSHIDATDQNN. Positions 16-27 are enriched in polar residues; sequence HLTSSHIDATDQ. The PP-loop motif motif lies at 64–69; sequence SGGKDS. [4Fe-4S] cluster-binding residues include C139, C142, and C230.

Belongs to the TtcA family. As to quaternary structure, homodimer. Mg(2+) is required as a cofactor. It depends on [4Fe-4S] cluster as a cofactor.

Its subcellular location is the cytoplasm. The enzyme catalyses cytidine(32) in tRNA + S-sulfanyl-L-cysteinyl-[cysteine desulfurase] + AH2 + ATP = 2-thiocytidine(32) in tRNA + L-cysteinyl-[cysteine desulfurase] + A + AMP + diphosphate + H(+). It participates in tRNA modification. In terms of biological role, catalyzes the ATP-dependent 2-thiolation of cytidine in position 32 of tRNA, to form 2-thiocytidine (s(2)C32). The sulfur atoms are provided by the cysteine/cysteine desulfurase (IscS) system. This is tRNA-cytidine(32) 2-sulfurtransferase from Pseudoalteromonas atlantica (strain T6c / ATCC BAA-1087).